Consider the following 348-residue polypeptide: MAVVASTSDDFYANYAFESADRKDENSIRVPRSTEDNRRLKYGHAEDDNSDIAYLNFPVIVPSLVFTVISMGCFVGGIFTSLKSDYIPDERELIRGYVIEYGSSRFRCNTTIPFPADGLPSILNLFELNVIGNVLFRYAVCIPIVIRVFNALTIRNLLRHEYDKKFSSLHKVMADSMPIFTFVEAFMMSLFSIVTVHEDFPEANRFFKIVFAMSSVVSMLTTTTVMFAFSSNSESKWDTVSMIMKLISVVIYVYLMPQYMQYHQSSITFPICHSYMPQLFALMEYFIIIAYATFHLSFLIDIRNISFICFPRSSSGECEPIDPINFKKGAKYEHCRAFEYNQRRILSL.

This is an uncharacterized protein from Caenorhabditis elegans.